Consider the following 161-residue polypeptide: Phosphopantetheine adenylyltransferase (161 aa).

Substrate is bound at residue Thr-10. ATP contacts are provided by residues Thr-10–Phe-11 and His-18. 3 residues coordinate substrate: Lys-42, Met-74, and Arg-88. ATP contacts are provided by residues Gly-89–Arg-91, Glu-99, and Trp-124–Ser-130.

Belongs to the bacterial CoaD family. In terms of assembly, homohexamer. It depends on Mg(2+) as a cofactor.

The protein localises to the cytoplasm. The enzyme catalyses (R)-4'-phosphopantetheine + ATP + H(+) = 3'-dephospho-CoA + diphosphate. Its pathway is cofactor biosynthesis; coenzyme A biosynthesis; CoA from (R)-pantothenate: step 4/5. Its function is as follows. Reversibly transfers an adenylyl group from ATP to 4'-phosphopantetheine, yielding dephospho-CoA (dPCoA) and pyrophosphate. This is Phosphopantetheine adenylyltransferase from Edwardsiella ictaluri (strain 93-146).